Consider the following 185-residue polypeptide: Elongation factor P 1 (185 aa).

It belongs to the elongation factor P family.

The protein resides in the cytoplasm. It participates in protein biosynthesis; polypeptide chain elongation. Involved in peptide bond synthesis. Stimulates efficient translation and peptide-bond synthesis on native or reconstituted 70S ribosomes in vitro. Probably functions indirectly by altering the affinity of the ribosome for aminoacyl-tRNA, thus increasing their reactivity as acceptors for peptidyl transferase. The chain is Elongation factor P 1 (efp1) from Chlamydia pneumoniae (Chlamydophila pneumoniae).